The chain runs to 446 residues: Vacuolar cation/proton exchanger 4 (446 aa).

Low complexity predominate over residues 1–16 (MSSISTESSSNLSLLE). A disordered region spans residues 1 to 33 (MSSISTESSSNLSLLENGGGGSDKPTAETSRRV). Residues 1–69 (MSSISTESSS…MRRILTNLQE (69 aa)) lie on the Cytoplasmic side of the membrane. A helical membrane pass occupies residues 70–90 (VLLGTKLFILFPAVPLAVVAH). Topologically, residues 91–96 (RYDCPR) are extracellular. The chain crosses the membrane as a helical span at residues 97–117 (AWVFALSLLGLTPLAERISFL). Topologically, residues 118–128 (TEQIAFHTGPT) are cytoplasmic. A helical membrane pass occupies residues 129–149 (VGGLMNATCGNATEMIIAILA). A cation selection region spans residues 138-173 (GNATEMIIAILAVGQRKMRIVKLSLLGSILSNLLFV). The Extracellular portion of the chain corresponds to 150–162 (VGQRKMRIVKLSL). A helical membrane pass occupies residues 163–183 (LGSILSNLLFVLGTSLFLGGI). Residues 184 to 196 (SNLRKHQSFDPRQ) lie on the Cytoplasmic side of the membrane. The helical transmembrane segment at 197–217 (GDMNSMLLYLALLCQTLPMIM) threads the bilayer. The Extracellular segment spans residues 218-238 (RFTMEAEEYDGSDVVVLSRAS). The chain crosses the membrane as a helical span at residues 239-259 (SFVMLIAYLAFLIFHLFSSHL). Over 260-285 (SPPPPPLPQREDVHDDDVSDKEEEGA) the chain is Cytoplasmic. A helical membrane pass occupies residues 286–306 (VIGMWSAIFWLIIMTLLVALL). Residues 307 to 319 (SDYLVSTIQDAAD) are Extracellular-facing. The chain crosses the membrane as a helical span at residues 320–340 (SWGLSVGFIGIILLPIVGNAA). The segment at 337 to 372 (GNAAEHAGAVIFAFRNKLDITLGIALGSATQIALFV) is cation selection. The Cytoplasmic portion of the chain corresponds to 341 to 359 (EHAGAVIFAFRNKLDITLG). Residues 360–380 (IALGSATQIALFVVPVTVLVA) traverse the membrane as a helical segment. The Extracellular portion of the chain corresponds to 381 to 388 (WTMGIEMD). The chain crosses the membrane as a helical span at residues 389–409 (LNFNLLETACFALSILVTSLV). Residues 410 to 416 (LQDGTSN) are Cytoplasmic-facing. A helical membrane pass occupies residues 417-437 (YMKGLVLLLCYVVIAACFFVS). Topologically, residues 438 to 446 (NSPSSKLLF) are extracellular.

The protein belongs to the Ca(2+):cation antiporter (CaCA) (TC 2.A.19) family. Cation/proton exchanger (CAX) subfamily. Expressed at low levels in all tissues.

It localises to the vacuole membrane. In terms of biological role, vacuolar cation/proton exchanger (CAX). Translocates Ca(2+) and other metal ions into vacuoles using the proton gradient formed by H(+)-ATPase and H(+)-pyrophosphatase. Cation selectivity transport in tobacco root tonoplast vesicles is Cd(2+)&gt;Zn(2+)&gt;&gt;Ca(2+)&gt;&gt;&gt;Mn(2+). This chain is Vacuolar cation/proton exchanger 4 (CAX4), found in Arabidopsis thaliana (Mouse-ear cress).